The primary structure comprises 416 residues: Squalene synthase (416 aa).

Arginine 52 and arginine 77 together coordinate NADP(+). Residues aspartate 80, glutamate 83, and aspartate 84 each contribute to the Mg(2+) site. Arginine 218 contacts NADP(+). Residues 284–304 (SVFNFCAIPQVMAIATLAACY) traverse the membrane as a helical segment. NADP(+)-binding residues include lysine 315 and arginine 317. The chain crosses the membrane as a helical span at residues 384 to 404 (PIYLSFIMLLAALSWQYLSTL).

It belongs to the phytoene/squalene synthase family. The cofactor is Mg(2+).

It localises to the endoplasmic reticulum membrane. The catalysed reaction is 2 (2E,6E)-farnesyl diphosphate + NADPH + H(+) = squalene + 2 diphosphate + NADP(+). The enzyme catalyses 2 (2E,6E)-farnesyl diphosphate + NADH + H(+) = squalene + 2 diphosphate + NAD(+). It carries out the reaction presqualene diphosphate + NADH + H(+) = squalene + diphosphate + NAD(+). It catalyses the reaction presqualene diphosphate + NADPH + H(+) = squalene + diphosphate + NADP(+). The catalysed reaction is 2 (2E,6E)-farnesyl diphosphate = presqualene diphosphate + diphosphate. The protein operates within terpene metabolism; lanosterol biosynthesis; lanosterol from farnesyl diphosphate: step 1/3. Catalyzes the condensation of 2 farnesyl pyrophosphate (FPP) moieties to form squalene. Proceeds in two distinct steps. In the first half-reaction, two molecules of FPP react to form the stable presqualene diphosphate intermediate (PSQPP), with concomitant release of a proton and a molecule of inorganic diphosphate. In the second half-reaction, PSQPP undergoes heterolysis, isomerization, and reduction with NADPH or NADH to form squalene. It is the first committed enzyme of the sterol biosynthesis pathway. The sequence is that of Squalene synthase (Fdft1) from Rattus norvegicus (Rat).